Here is a 246-residue protein sequence, read N- to C-terminus: Phycocyanobilin:ferredoxin oxidoreductase (246 aa).

This sequence belongs to the HY2 family.

It carries out the reaction (2R,3Z)-phycocyanobilin + 4 oxidized [2Fe-2S]-[ferredoxin] = biliverdin IXalpha + 4 reduced [2Fe-2S]-[ferredoxin] + 4 H(+). In terms of biological role, catalyzes the four-electron reduction of biliverdin IX-alpha (2-electron reduction at both the A and D rings); the reaction proceeds via an isolatable 2-electron intermediate, 181,182-dihydrobiliverdin. This Synechococcus sp. (strain CC9902) protein is Phycocyanobilin:ferredoxin oxidoreductase.